The primary structure comprises 807 residues: Probable E3 ubiquitin-protein ligase mug30 (807 aa).

In terms of domain architecture, HECT spans 453-807 (RNKDFRKALK…LLETNGFNIR (355 aa)). The Glycyl thioester intermediate role is filled by Cys-775.

The protein localises to the cytoplasm. The protein resides in the cytoskeleton. It is found in the microtubule organizing center. It localises to the spindle pole body. It catalyses the reaction S-ubiquitinyl-[E2 ubiquitin-conjugating enzyme]-L-cysteine + [acceptor protein]-L-lysine = [E2 ubiquitin-conjugating enzyme]-L-cysteine + N(6)-ubiquitinyl-[acceptor protein]-L-lysine.. It functions in the pathway protein modification; protein ubiquitination. In terms of biological role, probable E3 ubiquitin-protein ligase. Has a role in meiosis. The protein is Probable E3 ubiquitin-protein ligase mug30 (mug30) of Schizosaccharomyces pombe (strain 972 / ATCC 24843) (Fission yeast).